A 632-amino-acid polypeptide reads, in one-letter code: Phospholipid:diacylglycerol acyltransferase (632 aa).

A compositionally biased stretch (basic residues) spans 1–15; sequence MASSKKSKTHKKKKE. The interval 1 to 47 is disordered; it reads MASSKKSKTHKKKKEVKSPIDLPNSKKPTRALSEQPSASETQSVSNK. Over 1–56 the chain is Cytoplasmic; it reads MASSKKSKTHKKKKEVKSPIDLPNSKKPTRALSEQPSASETQSVSNKSRKSKFGKR. Positions 32 to 46 are enriched in polar residues; sequence LSEQPSASETQSVSN. A helical transmembrane segment spans residues 57 to 77; the sequence is LNFILGAILGICGAFFFAVGD. Residues 78–632 are Lumenal-facing; the sequence is DNAVFDPATL…NEINLDKPRN (555 aa). D136 serves as a coordination point for substrate. S293 acts as the Acyl-ester intermediate in catalysis. A substrate-binding site is contributed by M294. Residues D535 and H586 each act as charge relay system in the active site.

This sequence belongs to the AB hydrolase superfamily. Lipase family.

Its subcellular location is the endoplasmic reticulum membrane. It catalyses the reaction a glycerophospholipid + a 1,2-diacyl-sn-glycerol = a monoacylglycerophospholipid + a triacyl-sn-glycerol. Its pathway is glycerolipid metabolism; triacylglycerol biosynthesis. Functionally, catalyzes triacylglycerol (TAG) formation by an acyl-CoA independent pathway. The enzyme specifically transfers acyl groups from the sn-2 position of a phospholipid to diacylglycerol (DAG), thus forming an sn-1-lysophospholipid. Plays a major role in triacylglycerol formation at log phase. Involved in lipid particle synthesis from the endoplasmic reticulum, promoting localized TAG production at discrete ER subdomains. The chain is Phospholipid:diacylglycerol acyltransferase (plh1) from Schizosaccharomyces pombe (strain 972 / ATCC 24843) (Fission yeast).